Here is a 496-residue protein sequence, read N- to C-terminus: MPAMNLKYKFGLVNSAGRYLTAEKFGGKVNASGATLKARQVWILEQEESSTISYLKAPSGNFLSADKNGNVYCSVEDRTEDADTGFEIELQPDGKWALKNVSHQRYLACNGEELICSESSTSNPSANWTVQLAIHPQVCMKNVQHQRYAHLKTSEEGEDSVVVDELVPWGADSTLTLVYLGKGKYGLEAFNGKFVQTDGQLAGTANEQTQFTLIFTSGHLVLRDNNGRHLGVDSGTRVLKSSKPGLTKANYFILEDSCPQGAFEFGGKYASLKQGEDVSFKLLVDEDIEDTETFQLEFVETDKYAIRVCDPKKNSRDAKFWKTVAAGIQANGNSKDQTDCQFSVEYNGNDMHVRAPGGKYVSVRDNGHLFLQDSPKDFIFRLLNRPKLVLKCPHGFVGMKEGKAEVACNRSNFDVFTVTYKEGGYTIQDSCGKYWSCDDSSRIVLGEAAGTFFFEFHELSKFAIRAESNGMLIKGEQSGLFTANGSEVSKDTLWEF.

This sequence belongs to the fascin family.

The protein localises to the cytoplasm. Its subcellular location is the cytoskeleton. Functionally, acts as an actin bundling protein. The sequence is that of Fascin from Strongylocentrotus purpuratus (Purple sea urchin).